The primary structure comprises 281 residues: AT-hook motif nuclear-localized protein 20 (281 aa).

Disordered stretches follow at residues 43-85 and 216-247; these read MNQS…APIF and MEEE…DLSG. A DNA-binding region (a.T hook) is located at residues 67–79; sequence RRPRGRPPGSKNK. The PPC domain occupies 91–229; it reads PNALRSHVLE…EDGGGSRQIH (139 aa).

The protein resides in the nucleus. Transcription factor that specifically binds AT-rich DNA sequences related to the nuclear matrix attachment regions (MARs). Negatively regulates plant innate immunity (PTI) to pathogens through the down-regulation of the PAMP-triggered NHO1 and FRK1 expression. The chain is AT-hook motif nuclear-localized protein 20 from Arabidopsis thaliana (Mouse-ear cress).